We begin with the raw amino-acid sequence, 542 residues long: Global nitrogen regulator NrpR (542 aa).

The segment at 12–77 is winged helix-turn-helix; it reads IEILDILSKS…VITERGLEEL (66 aa). NRD stretches follow at residues 85-320 and 321-542; these read RLGS…KANI and RIKT…YKEI.

The protein belongs to the NrpR family. Homodimer.

Its activity is regulated as follows. Under nitrogen limitation, binding of the intracellular nitrogen metabolite 2-oxoglutarate to NrpR decreases the binding affinity of NrpR to DNA, leading to initiation of transcription. Its function is as follows. Transcriptional repressor of nitrogen fixation and assimilation genes. Binds to two tandem operators in the glnA and nif promoters, thereby blocking transcription of the genes. This is Global nitrogen regulator NrpR from Methanocaldococcus jannaschii (strain ATCC 43067 / DSM 2661 / JAL-1 / JCM 10045 / NBRC 100440) (Methanococcus jannaschii).